The primary structure comprises 401 residues: 26S proteasome regulatory subunit 6A (401 aa).

189 to 196 (GPPGTGKT) contributes to the ATP binding site.

It belongs to the AAA ATPase family. As to quaternary structure, the 26S proteasome consists of a 20S proteasome core and two 19S regulatory subunits. The 20S proteasome core is composed of 28 subunits that are arranged in four stacked rings, resulting in a barrel-shaped structure. The two end rings are each formed by seven alpha subunits, and the two central rings are each formed by seven beta subunits. The catalytic chamber with the active sites is on the inside of the barrel.

It localises to the cytoplasm. The protein resides in the nucleus. In terms of biological role, acts as a regulatory subunit of the 26S proteasome which degrades poly-ubiquitinated proteins in the cytoplasm and in the nucleus. It is essential for the regulated turnover of proteins and for the removal of misfolded proteins. The proteasome is a multicatalytic proteinase complex that is characterized by its ability to cleave peptides with Arg, Phe, Tyr, Leu, and Glu adjacent to the leaving group at neutral or slightly basic pH. This is 26S proteasome regulatory subunit 6A (RPT5) from Encephalitozoon cuniculi (strain GB-M1) (Microsporidian parasite).